The chain runs to 448 residues: Divalent metal cation transporter MntH (448 aa).

The segment covering 1–10 (MKKDKTERTK) has biased composition (basic and acidic residues). Residues 1–20 (MKKDKTERTKQSWRKAQNAP) form a disordered region. A run of 11 helical transmembrane segments spans residues 41 to 61 (LFAF…PGNW), 69 to 89 (SEFG…AVLL), 117 to 137 (GFVL…AEVI), 147 to 167 (FGIP…LVLF), 176 to 196 (IEVI…AEMV), 215 to 235 (IVTN…TVMP), 270 to 290 (FSLT…AAAF), 307 to 327 (LLNP…ALLA), 363 to 383 (VLAI…GINE), 384 to 404 (LLIF…IPLV), and 424 to 444 (IISW…LFYT).

This sequence belongs to the NRAMP family.

The protein resides in the cell membrane. Functionally, h(+)-stimulated, divalent metal cation uptake system. This is Divalent metal cation transporter MntH from Listeria monocytogenes serotype 4b (strain CLIP80459).